We begin with the raw amino-acid sequence, 479 residues long: FAD-dependent monooxygenase cdmI (479 aa).

3 residues coordinate FAD: Glu-43, Gly-57, and Arg-116. Asn-156 and Asn-198 each carry an N-linked (GlcNAc...) asparagine glycan. FAD is bound by residues Asp-315 and Ala-328. A helical membrane pass occupies residues 453 to 473 (PFILAVLAGLGFLLTMFKQQW).

The protein belongs to the paxM FAD-dependent monooxygenase family. Requires FAD as cofactor.

It is found in the membrane. The enzyme catalyses verruculide C + AH2 + O2 = verruculide C epoxide + A + H2O. The protein operates within secondary metabolite biosynthesis; terpenoid biosynthesis. Functionally, FAD-dependent monooxygenase; part of the gene cluster that mediates the biosynthesis of chrodrimanin B, a meroterpenoid that acts as a potent blocker of insect GABA-gated chloride channels. The first step of the pathway is the biosynthesis of 6-hydroxymellein by the polyketide synthase cdmE. The prenyltransferase cdmH acts as a 6-hydroxymellein 5-farnesyltransferase and produces the hydrophobic metabolite verruculide C. The FAD-dependent monooxygenase cdmI further converts verruculide C into verruculide B. The terpene cyclase cdmG then produced the pentacyclic molecule 3-hydroxypentacecilide A, the backbone structure of chrodrimanin B, via folding the farnesyl moiety of the substrate into the chair-boat conformation. The short-chain dehydrogenase/reductase cdmF functions as the 3-OH dehydrogenase that oxidizes the C-3 hydroxyl group of 3-hydroxypentacecilide A and produces chrodrimanin C, the dehydrogenated product of 3-hydroxypentacecilide A. The cytochrome P450 monooxygenase cdmJ then accepts both 3-hydroxypentacecilide A and chrodrimanin C and functions as a C-7-beta-hydroxylase to produce respectively chrodrimanin H and chrodrimanin F. The dioxygenase cdmA accepts chrodrimanin H to afford chrodrimanin E, which is further transformed to chrodrimanin A by the dioxygenase cdmD. CdmA can also accept chrodrimanin C as substrate to convert it into verruculide A, which is further converted into chrodrimanin T by cdmD. The last step of the biosynthesis is proposed to be performed by the acetyltransferase cdmC which acetylates chrodrimanin A to yield chrodrimanin B. The pathway may also lead to the production of additional shunt products, including chrodrimanins T and U. In Talaromyces verruculosus (Penicillium verruculosum), this protein is FAD-dependent monooxygenase cdmI.